The chain runs to 419 residues: Coiled-coil domain-containing protein 85C (419 aa).

A2 carries the N-acetylalanine modification. 2 coiled-coil regions span residues 22–88 and 118–159; these read ELLR…RELC and HEVA…AALA. 2 disordered regions span residues 162–268 and 307–348; these read GAAS…DPSS and HSES…AGQK. The span at 164 to 175 shows a compositional bias: gly residues; that stretch reads ASGGGGGGGGAG. Residues 176–189 show a composition bias toward low complexity; that stretch reads SRSSIDSQASLSGP. S178 carries the phosphoserine modification. A compositionally biased stretch (pro residues) spans 224–233; it reads PPPLLPPGPH. S246 is subject to Phosphoserine. Residues 307–325 are compositionally biased toward polar residues; it reads HSESQLASLPPSYQDSLQN. Residues 329-338 are compositionally biased toward pro residues; the sequence is CPAPELPSPP.

It belongs to the CCDC85 family. In terms of assembly, may interact with ARVCF, CTNND1, CTNND2 and PKP4.

It localises to the cell junction. The protein localises to the tight junction. It is found in the adherens junction. May play a role in cell-cell adhesion and epithelium development through its interaction with proteins of the beta-catenin family. May play an important role in cortical development, especially in the maintenance of radial glia. The sequence is that of Coiled-coil domain-containing protein 85C (CCDC85C) from Homo sapiens (Human).